Reading from the N-terminus, the 221-residue chain is Glutathione S-transferase alpha-5 (221 aa).

One can recognise a GST N-terminal domain in the interval 3–83; the sequence is GKPVLHYFDG…YIATKYNLYG (81 aa). N6-succinyllysine is present on K4. Glutathione-binding positions include Y9, R45, 54–55, and 67–68; these read QV and QT. Residues 85-207 form the GST C-terminal domain; it reads DMKERALIDM…LQPGSQRKPF (123 aa).

Belongs to the GST superfamily. Alpha family. Heterodimer of YC1 and YC2. Liver, nasal mucosa and epididymis.

Its subcellular location is the cytoplasm. It carries out the reaction RX + glutathione = an S-substituted glutathione + a halide anion + H(+). In terms of biological role, conjugation of reduced glutathione to a wide number of exogenous and endogenous hydrophobic electrophiles. Has substantial activity toward aflatoxin B1-8,9-epoxide. The polypeptide is Glutathione S-transferase alpha-5 (Gsta5) (Rattus norvegicus (Rat)).